A 1045-amino-acid polypeptide reads, in one-letter code: Extracellular serine protease (1045 aa).

A signal peptide spans Met1 to Ala27. Residues Gln49 to Ile396 form the Peptidase S8 domain. Active-site charge relay system residues include Asp76, His112, and Ser341. Residues Ser646–Phe1045 constitute a propeptide that is removed on maturation. The 277-residue stretch at Ile769–Phe1045 folds into the Autotransporter domain.

It belongs to the peptidase S8 family.

It localises to the secreted. This Serratia marcescens protein is Extracellular serine protease.